A 327-amino-acid polypeptide reads, in one-letter code: Small ribosomal subunit protein uS2 (327 aa).

Positions 258–327 (AGHTPVSETL…PGVADGAALE (70 aa)) are disordered.

Belongs to the universal ribosomal protein uS2 family.

This is Small ribosomal subunit protein uS2 from Anaplasma marginale (strain St. Maries).